Here is a 120-residue protein sequence, read N- to C-terminus: Large ribosomal subunit protein bL12 (120 aa).

The protein belongs to the bacterial ribosomal protein bL12 family. In terms of assembly, homodimer. Part of the ribosomal stalk of the 50S ribosomal subunit. Forms a multimeric L10(L12)X complex, where L10 forms an elongated spine to which 2 to 4 L12 dimers bind in a sequential fashion. Binds GTP-bound translation factors.

In terms of biological role, forms part of the ribosomal stalk which helps the ribosome interact with GTP-bound translation factors. Is thus essential for accurate translation. The sequence is that of Large ribosomal subunit protein bL12 from Clostridium botulinum (strain Alaska E43 / Type E3).